The chain runs to 978 residues: MHSWKKKLVVSQLALACTLAITSQANATTYDTWTYYDNPTTALDWNNMDAAGTVDGNYVNYSGFVYYNNANGDFDQTFNGDTVNGTISTYYLNHDYNDATSNELNISNSVIHGSITSMLPIGYYDRFDTLDHDGYSEYYRFNNGTDTVDGNWYDGDVFTLNIANSTIDDDYEAFYFTDSYKDGDVTKYTNETFDVSEGVAVNLDVESNINISNNSRVAGIALSQGNTYNNTYTTESHNWDNNINVFDSTVTSGSDYILDSAYTTDTGTFGTGHFGNSDEPSDYTGAGDVALSFTDDNGASDYAMKNNVYFSNSTLMGDVKFTSNWNANFDADGDDTNGDGVPDTNHGWADDGLNVDELNLTLDNGSKWVGQATYTVDTTSRMYDVETNSLTPGATLEDNAWNRIVGNEVFQSGVFNVTLNNGSEWDTVGDSTVDTLAVNNGSQVNVSNSDLTSDTIDLTNGSSLNIGEGGYVDTDHLTIDSYSTVGLTESTGWSTYSNLYANTITVTNGGVLDVNVGQFDTEVFSTDKLELTSGNTADHNGNVVSGVFNIHSSDYVLNADLVNDRTWDTTQANYGYGTIAMNSDGHLTINGNGDINNGDELDNSSVDNVVAATGNYKVRIDNATGAGSVADYKGNELIYVNDVNTDATFSAANKADLGAYTYQAKQEGNTVVLEQMELTDYANMALSIPSANTNIWNLEQDTVGTRLTNARHGLADNGGAWVSYFGGNFNGDNGTINYDQDVNGIMVGVDTKVDGNNAKWIVGAAAGFAKGDLSDRTGQVDQDSQSAYIYSSARFANNIFVDGNLSYSHFNNDLSANMSDGTYVDGNTSSDAWGFGLKLGYDLKLGDAGYVTPYGSVSGLFQSGDDYQLSNDMKVDGQSYDSMRYELGVDAGYTFTYSEDQALTPYFKLAYVYDDSNNDADVNGDSIDNGVEGSAVRVGLGTQFSFTKNFSAYTDANYLGGGDVDQDWSANVGVKYTW.

Positions 1-27 are cleaved as a signal peptide; that stretch reads MHSWKKKLVVSQLALACTLAITSQANA. The Autotransporter domain occupies 713–978; that stretch reads GLADNGGAWV…SANVGVKYTW (266 aa).

This is an uncharacterized protein from Salmonella typhimurium (strain LT2 / SGSC1412 / ATCC 700720).